A 236-amino-acid chain; its full sequence is Purine nucleoside phosphorylase DeoD-type (236 aa).

His-5 contributes to the a purine D-ribonucleoside binding site. Phosphate contacts are provided by residues Gly-21, Arg-25, Arg-44, and 88–91; that span reads RVGS. A purine D-ribonucleoside contacts are provided by residues 180–182 and 204–205; these read EME and SD. Residue Asp-205 is the Proton donor of the active site.

This sequence belongs to the PNP/UDP phosphorylase family. Homohexamer; trimer of homodimers.

It catalyses the reaction a purine D-ribonucleoside + phosphate = a purine nucleobase + alpha-D-ribose 1-phosphate. The enzyme catalyses a purine 2'-deoxy-D-ribonucleoside + phosphate = a purine nucleobase + 2-deoxy-alpha-D-ribose 1-phosphate. Functionally, catalyzes the reversible phosphorolytic breakdown of the N-glycosidic bond in the beta-(deoxy)ribonucleoside molecules, with the formation of the corresponding free purine bases and pentose-1-phosphate. The protein is Purine nucleoside phosphorylase DeoD-type of Psychromonas ingrahamii (strain DSM 17664 / CCUG 51855 / 37).